The sequence spans 145 residues: Large ribosomal subunit protein bL17 (145 aa).

The protein belongs to the bacterial ribosomal protein bL17 family. As to quaternary structure, part of the 50S ribosomal subunit. Contacts protein L32.

This is Large ribosomal subunit protein bL17 from Orientia tsutsugamushi (strain Ikeda) (Rickettsia tsutsugamushi).